The primary structure comprises 160 residues: 3-hydroxyacyl-[acyl-carrier-protein] dehydratase FabZ (160 aa).

The active site involves H59.

Belongs to the thioester dehydratase family. FabZ subfamily.

It is found in the cytoplasm. The enzyme catalyses a (3R)-hydroxyacyl-[ACP] = a (2E)-enoyl-[ACP] + H2O. Its function is as follows. Involved in unsaturated fatty acids biosynthesis. Catalyzes the dehydration of short chain beta-hydroxyacyl-ACPs and long chain saturated and unsaturated beta-hydroxyacyl-ACPs. This is 3-hydroxyacyl-[acyl-carrier-protein] dehydratase FabZ from Burkholderia thailandensis (strain ATCC 700388 / DSM 13276 / CCUG 48851 / CIP 106301 / E264).